We begin with the raw amino-acid sequence, 33 residues long: MNLEVLAQLTVLTLIVISGPLVIALLAVRKGNL.

The helical transmembrane segment at 5 to 25 (VLAQLTVLTLIVISGPLVIAL) threads the bilayer.

It belongs to the Psb30/Ycf12 family. PSII is composed of 1 copy each of membrane proteins PsbA, PsbB, PsbC, PsbD, PsbE, PsbF, PsbH, PsbI, PsbJ, PsbK, PsbL, PsbM, PsbT, PsbX, PsbY, PsbZ, Psb30/Ycf12, peripheral proteins of the oxygen-evolving complex and a large number of cofactors. It forms dimeric complexes.

It is found in the plastid. The protein resides in the chloroplast thylakoid membrane. Its function is as follows. A core subunit of photosystem II (PSII), probably helps stabilize the reaction center. This is Photosystem II reaction center protein Psb30 from Cycas taitungensis (Prince sago).